The sequence spans 43 residues: Metallothionein-3 (43 aa).

It belongs to the metallothionein superfamily. Type 5 family.

Functionally, this protein binds cations of several transition elements. Thought to be involved in metal ion homeostasis. This Drosophila melanogaster (Fruit fly) protein is Metallothionein-3 (MtnC).